We begin with the raw amino-acid sequence, 127 residues long: Ribonuclease P protein component (127 aa).

Belongs to the RnpA family. As to quaternary structure, consists of a catalytic RNA component (M1 or rnpB) and a protein subunit.

The catalysed reaction is Endonucleolytic cleavage of RNA, removing 5'-extranucleotides from tRNA precursor.. In terms of biological role, RNaseP catalyzes the removal of the 5'-leader sequence from pre-tRNA to produce the mature 5'-terminus. It can also cleave other RNA substrates such as 4.5S RNA. The protein component plays an auxiliary but essential role in vivo by binding to the 5'-leader sequence and broadening the substrate specificity of the ribozyme. In Prochlorococcus marinus (strain SARG / CCMP1375 / SS120), this protein is Ribonuclease P protein component.